Consider the following 69-residue polypeptide: MVIFLAYFLVVNESEAFFGHLFKLATKIIPSLFQRKKERSVMNRDLENLFDPYQRNLEMDRLLKQLRNY.

An N-terminal signal peptide occupies residues 1-16 (MVIFLAYFLVVNESEA). The propeptide occupies 38-69 (ERSVMNRDLENLFDPYQRNLEMDRLLKQLRNY).

The protein belongs to the non-disulfide-bridged peptide (NDBP) superfamily. Medium-length antimicrobial peptide (group 3) family. Expressed by the venom gland.

The protein localises to the secreted. The protein resides in the target cell membrane. Its function is as follows. Amphipathic peptide that exhibits extensive cytolytic activities against both prokaryotic and eukaryotic cells. Acts by fastly disrupting the bacterial membrane. Is more potent against Gram-positive bacteria than against Gram-negative bacteria, and fungi (LC=25.1-8.3 uM). Shows potent activity against penicillin (MIC=3.0 uM) and methicillin (MIC=1.5-3.0 uM) resistant bacteria. Is lethal to the fungus Beauveria sp (LC=1.9 uM), a highly lethal pathogenic fungus to insects and resistant to many AMPs. Shows hemolytic activity against rabbit erythrocytes (37.7% of inhibition at 6.25 uM) and cytolysis against rat dorsal root ganglions. May act by disrupting the integrity of the bacterial cell membrane. Antibiotic activity is not affected by major negatively charged components of the prokaryotic cell wall (e.g. lipopolysaccharides and lipoteichoic acid). In vivo, intravenous injection into mice tail provokes uncomfortable symptoms with a death rate of 12.5%. In vivo, in a mouse model of lethal peritonitis, shows potent antibiotic activity without cytotoxicity, improving the survival rate. The polypeptide is Antimicrobial peptide Meucin-18 (Mesobuthus eupeus (Lesser Asian scorpion)).